A 675-amino-acid polypeptide reads, in one-letter code: INO80 complex subunit D (675 aa).

Disordered stretches follow at residues 1–39 (MNNNSNNNNNNNIDQKNETTNEITNNTSNNNNIINNVNQ), 183–203 (TGNNNNNTTTTTTTTTTNSTP), 274–324 (LKQK…ERQV), 473–523 (DSNK…KLNK), and 627–675 (VPVT…TMIS). Composition is skewed to low complexity over residues 282-318 (QQLQNQKMFEQSQQQDQQQKPVQQPIQQQQQQDQLQI), 482-519 (NNDNNINNNNNNNNNNNNNNNNNNNNNNNNNNNNNNNN), and 634-648 (NQNNQNNNNNNTNNS). Residues 664 to 675 (EILKDSDNTMIS) are compositionally biased toward basic and acidic residues.

The protein belongs to the INO80D family. As to quaternary structure, component of the chromatin-remodeling INO80 complex.

Its subcellular location is the nucleus. Functionally, putative regulatory component of the chromatin remodeling INO80 complex which is involved in transcriptional regulation, DNA replication and probably DNA repair. The protein is INO80 complex subunit D of Dictyostelium discoideum (Social amoeba).